Reading from the N-terminus, the 292-residue chain is Nitrogenase iron protein 2 (292 aa).

12 to 19 (GKGGIGKS) provides a ligand contact to ATP. Cysteine 97 serves as a coordination point for [4Fe-4S] cluster. Arginine 100 carries the post-translational modification ADP-ribosylarginine; by dinitrogenase reductase ADP-ribosyltransferase. Cysteine 133 is a [4Fe-4S] cluster binding site.

This sequence belongs to the NifH/BchL/ChlL family. As to quaternary structure, homodimer. It depends on [4Fe-4S] cluster as a cofactor. Post-translationally, the reversible ADP-ribosylation of Arg-100 inactivates the nitrogenase reductase and regulates nitrogenase activity.

The catalysed reaction is N2 + 8 reduced [2Fe-2S]-[ferredoxin] + 16 ATP + 16 H2O = H2 + 8 oxidized [2Fe-2S]-[ferredoxin] + 2 NH4(+) + 16 ADP + 16 phosphate + 6 H(+). Its function is as follows. The key enzymatic reactions in nitrogen fixation are catalyzed by the nitrogenase complex, which has 2 components: the iron protein and the molybdenum-iron protein. The protein is Nitrogenase iron protein 2 (nifH2) of Paenibacillus durus (Paenibacillus azotofixans).